The sequence spans 381 residues: tRNA-cytidine(32) 2-sulfurtransferase (381 aa).

Positions 101-106 (SGGKDS) match the PP-loop motif motif. [4Fe-4S] cluster is bound by residues C176, C179, and C267.

Belongs to the TtcA family. In terms of assembly, homodimer. Requires Mg(2+) as cofactor. It depends on [4Fe-4S] cluster as a cofactor.

It localises to the cytoplasm. The catalysed reaction is cytidine(32) in tRNA + S-sulfanyl-L-cysteinyl-[cysteine desulfurase] + AH2 + ATP = 2-thiocytidine(32) in tRNA + L-cysteinyl-[cysteine desulfurase] + A + AMP + diphosphate + H(+). It participates in tRNA modification. Functionally, catalyzes the ATP-dependent 2-thiolation of cytidine in position 32 of tRNA, to form 2-thiocytidine (s(2)C32). The sulfur atoms are provided by the cysteine/cysteine desulfurase (IscS) system. This is tRNA-cytidine(32) 2-sulfurtransferase from Psychrobacter cryohalolentis (strain ATCC BAA-1226 / DSM 17306 / VKM B-2378 / K5).